A 634-amino-acid polypeptide reads, in one-letter code: CRISPR-associated protein MJ1674 (634 aa).

Functionally, CRISPR (clustered regularly interspaced short palindromic repeat) is an adaptive immune system that provides protection against mobile genetic elements (viruses, transposable elements and conjugative plasmids). CRISPR clusters contain spacers, sequences complementary to antecedent mobile elements, and target invading nucleic acids. CRISPR clusters are transcribed and processed into CRISPR RNA (crRNA). The type III Csm effector complex binds crRNA and acts as a crRNA-guided RNase, DNase and cyclic oligoadenylate synthase; binding of target RNA cognate to the crRNA is required for all activities. This Methanocaldococcus jannaschii (strain ATCC 43067 / DSM 2661 / JAL-1 / JCM 10045 / NBRC 100440) (Methanococcus jannaschii) protein is CRISPR-associated protein MJ1674.